The following is a 654-amino-acid chain: Import motor subunit, mitochondrial (654 aa).

A mitochondrion-targeting transit peptide spans 1–23 (MLAAKNILNRSSLSSSFRIATRL). At Thr330 the chain carries Phosphothreonine. Residues 629–654 (EQLYKNDSNNNNNNNGNNAESGETKQ) form a disordered region. Residues 637 to 646 (NNNNNNNGNN) are compositionally biased toward low complexity.

The protein belongs to the heat shock protein 70 family. In terms of assembly, component of the PAM complex, at least composed of SSC1 (mtHsp70), MGE1, TIM44, PAM16/TIM16, PAM17 and PAM18/TIM14. In the complex, SSC1 interacts directly with PAM18 and TIM44. Interacts with NAP1.

The protein resides in the mitochondrion matrix. The catalysed reaction is ATP + H2O = ADP + phosphate + H(+). Its function is as follows. Essential component of the PAM complex, a complex required for the translocation of transit peptide-containing proteins from the inner membrane into the mitochondrial matrix in an ATP-dependent manner. Constitutes the ATP-driven core of the motor and binds the precursor preprotein. Required for the import of the processed frataxin homolog YFH1 into the mitochondrion. In Saccharomyces cerevisiae (strain ATCC 204508 / S288c) (Baker's yeast), this protein is Import motor subunit, mitochondrial.